A 672-amino-acid polypeptide reads, in one-letter code: DNA ligase (672 aa).

Residues 37–41, 86–87, and glutamate 115 each bind NAD(+); these read DAEYD and SL. The N6-AMP-lysine intermediate role is filled by lysine 117. NAD(+) is bound by residues arginine 138, glutamate 172, lysine 288, and lysine 312. The Zn(2+) site is built by cysteine 406, cysteine 409, cysteine 424, and cysteine 429. One can recognise a BRCT domain in the interval 590 to 672; it reads DISSTFAGKT…LQEIQQSKQV (83 aa).

It belongs to the NAD-dependent DNA ligase family. LigA subfamily. Requires Mg(2+) as cofactor. The cofactor is Mn(2+).

The catalysed reaction is NAD(+) + (deoxyribonucleotide)n-3'-hydroxyl + 5'-phospho-(deoxyribonucleotide)m = (deoxyribonucleotide)n+m + AMP + beta-nicotinamide D-nucleotide.. DNA ligase that catalyzes the formation of phosphodiester linkages between 5'-phosphoryl and 3'-hydroxyl groups in double-stranded DNA using NAD as a coenzyme and as the energy source for the reaction. It is essential for DNA replication and repair of damaged DNA. This chain is DNA ligase, found in Anoxybacillus flavithermus (strain DSM 21510 / WK1).